The following is a 351-amino-acid chain: Glycerol-1-phosphate dehydrogenase [NAD(P)+] (351 aa).

NAD(+) is bound by residues 98–102 (GSIID) and 120–123 (TTAS). A substrate-binding site is contributed by Asp-125. Position 129 (Ser-129) interacts with NAD(+). Asp-172 provides a ligand contact to substrate. Residues Asp-172 and His-252 each contribute to the Zn(2+) site. His-256 provides a ligand contact to substrate. Position 268 (His-268) interacts with Zn(2+).

Belongs to the glycerol-1-phosphate dehydrogenase family. Zn(2+) serves as cofactor.

It localises to the cytoplasm. It carries out the reaction sn-glycerol 1-phosphate + NAD(+) = dihydroxyacetone phosphate + NADH + H(+). It catalyses the reaction sn-glycerol 1-phosphate + NADP(+) = dihydroxyacetone phosphate + NADPH + H(+). It participates in membrane lipid metabolism; glycerophospholipid metabolism. In terms of biological role, catalyzes the NAD(P)H-dependent reduction of dihydroxyacetonephosphate (DHAP or glycerone phosphate) to glycerol 1-phosphate (G1P). The G1P thus generated is used as the glycerophosphate backbone of phospholipids in the cellular membranes of Archaea. In Thermococcus kodakarensis (strain ATCC BAA-918 / JCM 12380 / KOD1) (Pyrococcus kodakaraensis (strain KOD1)), this protein is Glycerol-1-phosphate dehydrogenase [NAD(P)+].